The following is a 163-amino-acid chain: Large ribosomal subunit protein uL10 (163 aa).

This sequence belongs to the universal ribosomal protein uL10 family. As to quaternary structure, part of the ribosomal stalk of the 50S ribosomal subunit. The N-terminus interacts with L11 and the large rRNA to form the base of the stalk. The C-terminus forms an elongated spine to which L12 dimers bind in a sequential fashion forming a multimeric L10(L12)X complex.

Forms part of the ribosomal stalk, playing a central role in the interaction of the ribosome with GTP-bound translation factors. The protein is Large ribosomal subunit protein uL10 of Histophilus somni (strain 129Pt) (Haemophilus somnus).